Reading from the N-terminus, the 423-residue chain is Serine--tRNA ligase (423 aa).

Residues Met-1–Asp-12 are compositionally biased toward basic and acidic residues. The segment at Met-1 to Glu-26 is disordered. Position 230-232 (Thr-230–Glu-232) interacts with L-serine. Residues Arg-261 to Glu-263 and Val-277 each bind ATP. Residue Glu-284 participates in L-serine binding. Glu-348–Ser-351 lines the ATP pocket. Position 383 (Thr-383) interacts with L-serine.

This sequence belongs to the class-II aminoacyl-tRNA synthetase family. Type-1 seryl-tRNA synthetase subfamily. In terms of assembly, homodimer. The tRNA molecule binds across the dimer.

Its subcellular location is the cytoplasm. The enzyme catalyses tRNA(Ser) + L-serine + ATP = L-seryl-tRNA(Ser) + AMP + diphosphate + H(+). It catalyses the reaction tRNA(Sec) + L-serine + ATP = L-seryl-tRNA(Sec) + AMP + diphosphate + H(+). It participates in aminoacyl-tRNA biosynthesis; selenocysteinyl-tRNA(Sec) biosynthesis; L-seryl-tRNA(Sec) from L-serine and tRNA(Sec): step 1/1. Functionally, catalyzes the attachment of serine to tRNA(Ser). Is also able to aminoacylate tRNA(Sec) with serine, to form the misacylated tRNA L-seryl-tRNA(Sec), which will be further converted into selenocysteinyl-tRNA(Sec). The protein is Serine--tRNA ligase of Beutenbergia cavernae (strain ATCC BAA-8 / DSM 12333 / CCUG 43141 / JCM 11478 / NBRC 16432 / NCIMB 13614 / HKI 0122).